We begin with the raw amino-acid sequence, 436 residues long: GTPase Der (436 aa).

2 EngA-type G domains span residues 4-167 (PTVA…PVEE) and 175-351 (IRFS…ESQN). GTP contacts are provided by residues 10–17 (GRPNVGKS), 57–61 (DTGGI), 119–122 (NKVD), 181–188 (GRPNVGKS), 229–233 (DTAGM), and 294–297 (NKWD). One can recognise a KH-like domain in the interval 352–436 (KRIPSAVLND…PINLIARKRK (85 aa)).

This sequence belongs to the TRAFAC class TrmE-Era-EngA-EngB-Septin-like GTPase superfamily. EngA (Der) GTPase family. Associates with the 50S ribosomal subunit.

Functionally, GTPase that plays an essential role in the late steps of ribosome biogenesis. The polypeptide is GTPase Der (Streptococcus agalactiae serotype III (strain NEM316)).